Consider the following 171-residue polypeptide: Sec-independent protein translocase protein TatB (171 aa).

Residues methionine 1 to glycine 21 traverse the membrane as a helical segment. The segment at lysine 117–proline 171 is disordered. The segment covering alanine 130–glutamate 139 has biased composition (polar residues).

Belongs to the TatB family. As to quaternary structure, the Tat system comprises two distinct complexes: a TatABC complex, containing multiple copies of TatA, TatB and TatC subunits, and a separate TatA complex, containing only TatA subunits. Substrates initially bind to the TatABC complex, which probably triggers association of the separate TatA complex to form the active translocon.

The protein localises to the cell inner membrane. Functionally, part of the twin-arginine translocation (Tat) system that transports large folded proteins containing a characteristic twin-arginine motif in their signal peptide across membranes. Together with TatC, TatB is part of a receptor directly interacting with Tat signal peptides. TatB may form an oligomeric binding site that transiently accommodates folded Tat precursor proteins before their translocation. This chain is Sec-independent protein translocase protein TatB, found in Escherichia coli O157:H7.